The primary structure comprises 196 residues: Imidazoleglycerol-phosphate dehydratase (196 aa).

This sequence belongs to the imidazoleglycerol-phosphate dehydratase family.

It localises to the cytoplasm. The enzyme catalyses D-erythro-1-(imidazol-4-yl)glycerol 3-phosphate = 3-(imidazol-4-yl)-2-oxopropyl phosphate + H2O. It functions in the pathway amino-acid biosynthesis; L-histidine biosynthesis; L-histidine from 5-phospho-alpha-D-ribose 1-diphosphate: step 6/9. This Moorella thermoacetica (strain ATCC 39073 / JCM 9320) protein is Imidazoleglycerol-phosphate dehydratase.